We begin with the raw amino-acid sequence, 101 residues long: uncharacterized protein (101 aa).

The next 3 helical transmembrane spans lie at 20–40 (KHFI…LLGL), 59–79 (GVIA…MYIA), and 81–101 (SEMW…ALFF).

The protein resides in the endoplasmic reticulum. The protein localises to the membrane. This is an uncharacterized protein from Saccharomyces cerevisiae (strain ATCC 204508 / S288c) (Baker's yeast).